A 100-amino-acid chain; its full sequence is Succinate dehydrogenase subunit 7B, mitochondrial (100 aa).

A disordered region spans residues 1 to 25 (MAFLLNNASISSHLRSSSSQKTGDA). The transit peptide at 1 to 32 (MAFLLNNASISSHLRSSSSQKTGDALSISRRG) directs the protein to the mitochondrion. Over residues 9 to 19 (SISSHLRSSSS) the composition is skewed to low complexity.

In terms of assembly, component of complex II composed of eight subunits in plants: four classical SDH subunits SDH1, SDH2, SDH3 and SDH4 (a flavoprotein (FP), an iron-sulfur protein (IP), and a cytochrome b composed of a large and a small subunit.), as well as four subunits unknown in mitochondria from bacteria and heterotrophic eukaryotes.

Its subcellular location is the mitochondrion inner membrane. The protein operates within carbohydrate metabolism; tricarboxylic acid cycle. This Arabidopsis thaliana (Mouse-ear cress) protein is Succinate dehydrogenase subunit 7B, mitochondrial.